We begin with the raw amino-acid sequence, 808 residues long: Bifunctional uridylyltransferase/uridylyl-removing enzyme (808 aa).

The tract at residues 1–315 (MEAESPCAAS…ALVRRPKRRP (315 aa)) is uridylyltransferase. The uridylyl-removing stretch occupies residues 316–609 (LDEGVVEYAG…EISPRDGERI (294 aa)). In terms of domain architecture, HD spans 430 to 544 (VDRHVVETAV…LEVLHALSEA (115 aa)). 2 consecutive ACT domains span residues 610 to 686 (DAVI…GMLQ) and 730 to 805 (ILEV…VDEP).

The protein belongs to the GlnD family. It depends on Mg(2+) as a cofactor.

It carries out the reaction [protein-PII]-L-tyrosine + UTP = [protein-PII]-uridylyl-L-tyrosine + diphosphate. The enzyme catalyses [protein-PII]-uridylyl-L-tyrosine + H2O = [protein-PII]-L-tyrosine + UMP + H(+). Functionally, modifies, by uridylylation and deuridylylation, the PII regulatory protein (GlnB), in response to the nitrogen status of the cell that GlnD senses through the glutamine level. Under low glutamine levels, catalyzes the conversion of the PII protein and UTP to PII-UMP and PPi, while under higher glutamine levels, GlnD hydrolyzes PII-UMP to PII and UMP (deuridylylation). Thus, controls uridylylation state and activity of the PII protein, and plays an important role in the regulation of nitrogen assimilation and metabolism. In Mycobacterium tuberculosis (strain CDC 1551 / Oshkosh), this protein is Bifunctional uridylyltransferase/uridylyl-removing enzyme.